We begin with the raw amino-acid sequence, 356 residues long: tRNA-specific 2-thiouridylase MnmA (356 aa).

ATP contacts are provided by residues 6–13 (AMSGGVDS) and leucine 32. Catalysis depends on cysteine 101, which acts as the Nucleophile. An intrachain disulfide couples cysteine 101 to cysteine 193. Glycine 125 provides a ligand contact to ATP. An interaction with tRNA region spans residues 143–145 (KDQ). Catalysis depends on cysteine 193, which acts as the Cysteine persulfide intermediate.

It belongs to the MnmA/TRMU family.

The protein resides in the cytoplasm. It carries out the reaction S-sulfanyl-L-cysteinyl-[protein] + uridine(34) in tRNA + AH2 + ATP = 2-thiouridine(34) in tRNA + L-cysteinyl-[protein] + A + AMP + diphosphate + H(+). Functionally, catalyzes the 2-thiolation of uridine at the wobble position (U34) of tRNA, leading to the formation of s(2)U34. The chain is tRNA-specific 2-thiouridylase MnmA from Mycobacteroides abscessus (strain ATCC 19977 / DSM 44196 / CCUG 20993 / CIP 104536 / JCM 13569 / NCTC 13031 / TMC 1543 / L948) (Mycobacterium abscessus).